We begin with the raw amino-acid sequence, 2529 residues long: Zinc finger FYVE domain-containing protein 26 (2529 aa).

Disordered stretches follow at residues 584–650, 689–709, and 733–810; these read HLPE…PGPH, SSHRTPEETKLPEDQSCSAAR, and VTSN…RFQT. Phosphoserine occurs at positions 605 and 609. The span at 689–701 shows a compositional bias: basic and acidic residues; that stretch reads SSHRTPEETKLPE. A compositionally biased stretch (basic residues) spans 755 to 765; it reads SSLRRGRRTRR. Positions 778-796 are enriched in low complexity; sequence SLEGTSSELSTSTSEGSLS. Phosphoserine is present on serine 791. The span at 797–810 shows a compositional bias: polar residues; sequence AVSGQVESDSRFQT. The stretch at 859-884 forms a coiled coil; the sequence is MFVERYQEVIQELARVEHKIENQNSD. The tract at residues 1258–1286 is disordered; that stretch reads GLPLSTLGSPRPSENPSAERKSHSSPKDS. The span at 1263 to 1273 shows a compositional bias: polar residues; it reads TLGSPRPSENP. Positions 1274–1283 are enriched in basic and acidic residues; it reads SAERKSHSSP. The stretch at 1488–1515 forms a coiled coil; that stretch reads VSDMAVQEELKSELQRKLMELRVYQKIL. A phosphoserine mark is found at serine 1732, serine 1754, serine 1770, and serine 1772. Residues 1762 to 1799 are disordered; the sequence is APGSALVRSPSPKERAFPQTQPPVEFVPPETPPARDQW. The FYVE-type zinc-finger motif lies at 1802 to 1862; it reads DETESVCMVC…VCDQCYSYYN (61 aa). Zn(2+) contacts are provided by cysteine 1808, cysteine 1811, cysteine 1825, cysteine 1828, cysteine 1833, cysteine 1836, cysteine 1854, and cysteine 1857. The tract at residues 1865 to 1884 is disordered; sequence TPEESPCQSEVPDSAKNESP.

The protein belongs to the ZFYVE26 family. In terms of assembly, interacts with AP5Z1, AP5B1, AP5S1 and SPG11. Interacts with TTC19 and KIF13A.

The protein localises to the cytoplasm. Its subcellular location is the cytoskeleton. It localises to the microtubule organizing center. It is found in the centrosome. The protein resides in the midbody. Functionally, phosphatidylinositol 3-phosphate-binding protein required for the abscission step in cytokinesis: recruited to the midbody during cytokinesis and acts as a regulator of abscission. May also be required for efficient homologous recombination DNA double-strand break repair. The sequence is that of Zinc finger FYVE domain-containing protein 26 (Zfyve26) from Mus musculus (Mouse).